The primary structure comprises 146 residues: Hemoglobin subunit beta (146 aa).

A Globin domain is found at 2-146 (HWSAEEKQLI…VAHALARKYH (145 aa)). Positions 63 and 92 each coordinate heme b.

Belongs to the globin family. Heterotetramer of two alpha chains and two beta chains. In terms of tissue distribution, red blood cells.

Functionally, involved in oxygen transport from the lung to the various peripheral tissues. In Anser anser anser (Western greylag goose), this protein is Hemoglobin subunit beta (HBB).